Reading from the N-terminus, the 168-residue chain is Peptide deformylase (168 aa).

Residues C92 and H134 each coordinate Fe cation. E135 is a catalytic residue. H138 serves as a coordination point for Fe cation.

This sequence belongs to the polypeptide deformylase family. The cofactor is Fe(2+).

The catalysed reaction is N-terminal N-formyl-L-methionyl-[peptide] + H2O = N-terminal L-methionyl-[peptide] + formate. Removes the formyl group from the N-terminal Met of newly synthesized proteins. Requires at least a dipeptide for an efficient rate of reaction. N-terminal L-methionine is a prerequisite for activity but the enzyme has broad specificity at other positions. This chain is Peptide deformylase, found in Pseudomonas aeruginosa (strain ATCC 15692 / DSM 22644 / CIP 104116 / JCM 14847 / LMG 12228 / 1C / PRS 101 / PAO1).